Consider the following 428-residue polypeptide: C4-dicarboxylate transport protein (428 aa).

8 consecutive transmembrane segments (helical) span residues 8 to 28 (VLYV…HYYP), 44 to 64 (LIKM…IAGM), 78 to 98 (LLYF…ATHI), 148 to 168 (GEIL…AHLG), 184 to 204 (VLFG…FGAM), 222 to 242 (LIGT…GAIA), 307 to 327 (IYMT…LTWM), and 355 to 375 (AATL…ILGI).

The protein belongs to the dicarboxylate/amino acid:cation symporter (DAACS) (TC 2.A.23) family.

The protein resides in the cell inner membrane. Functionally, responsible for the transport of dicarboxylates such as succinate, fumarate, and malate from the periplasm across the membrane. In Burkholderia pseudomallei (strain 1106a), this protein is C4-dicarboxylate transport protein.